Here is a 276-residue protein sequence, read N- to C-terminus: Insulin-like growth factor-binding protein 2-A (276 aa).

A signal peptide spans 1–22 (MLSYVSCGLLLALVTFHGTARS). In terms of domain architecture, IGFBP N-terminal spans 24–105 (MVFRCPSCTA…VQGLGRCGRK (82 aa)). 9 disulfide bridges follow: cysteine 28–cysteine 55, cysteine 31–cysteine 57, cysteine 39–cysteine 58, cysteine 46–cysteine 61, cysteine 69–cysteine 82, cysteine 76–cysteine 102, cysteine 180–cysteine 214, cysteine 225–cysteine 236, and cysteine 238–cysteine 259. In terms of domain architecture, Thyroglobulin type-1 spans 177–259 (QSQCQQELDQ…SPLIRGDPNC (83 aa)). A Cell attachment site motif is present at residues 254–256 (RGD).

Interacts equally well with igf1 and igf2. In embryos at 24 hpf, initially expressed in the lens and cranial region, and at 48 and 72 hpf in the brain boundary vasculature. Expression in these regions persists throughout the hatching period and by 96 hpf expression is most abundant in the liver. In both male and female adults, highest expression is in the liver with modest expression in the brain. In male but not females adults, expressed at a low level in muscle and gonad. Also expressed in the adult intestine.

The protein localises to the secreted. Functionally, IGF-binding proteins prolong the half-life of the IGFs and have been shown to either inhibit or stimulate the growth promoting effects of the IGFs on cell culture. They alter the interaction of IGFs with their cell surface receptors. This chain is Insulin-like growth factor-binding protein 2-A (igfbp2a), found in Danio rerio (Zebrafish).